The chain runs to 301 residues: Ubiquinone biosynthesis protein COQ4, mitochondrial (301 aa).

The N-terminal 46 residues, 1–46 (MEVTLKRSAALARQTTPLLRPLRPVATYPSNNNNNNNPTPQQRRPY), are a transit peptide targeting the mitochondrion. The segment at 14–48 (QTTPLLRPLRPVATYPSNNNNNNNPTPQQRRPYSL) is disordered. Residues 38 to 48 (PTPQQRRPYSL) are compositionally biased toward polar residues. Zn(2+)-binding residues include H185, D186, H189, and E201.

Belongs to the COQ4 family. Component of a multi-subunit COQ enzyme complex, composed of at least COQ3, COQ4, COQ5, COQ6, COQ7 and COQ9. Zn(2+) is required as a cofactor.

It localises to the mitochondrion inner membrane. The catalysed reaction is a 4-hydroxy-3-methoxy-5-(all-trans-polyprenyl)benzoate + H(+) = a 2-methoxy-6-(all-trans-polyprenyl)phenol + CO2. The protein operates within cofactor biosynthesis; ubiquinone biosynthesis. Its function is as follows. Lyase that catalyzes the C1-decarboxylation of 4-hydroxy-3-methoxy-5-(all-trans-polyprenyl)benzoic acid into 2-methoxy-6-(all-trans-polyprenyl)phenol during ubiquinone biosynthesis. The protein is Ubiquinone biosynthesis protein COQ4, mitochondrial of Podospora anserina (strain S / ATCC MYA-4624 / DSM 980 / FGSC 10383) (Pleurage anserina).